The chain runs to 429 residues: Serine hydroxymethyltransferase (429 aa).

(6S)-5,6,7,8-tetrahydrofolate contacts are provided by residues Leu126 and 130–132 (GHL). Lys235 is modified (N6-(pyridoxal phosphate)lysine).

Belongs to the SHMT family. Homodimer. It depends on pyridoxal 5'-phosphate as a cofactor.

The protein localises to the cytoplasm. The catalysed reaction is (6R)-5,10-methylene-5,6,7,8-tetrahydrofolate + glycine + H2O = (6S)-5,6,7,8-tetrahydrofolate + L-serine. It participates in one-carbon metabolism; tetrahydrofolate interconversion. The protein operates within amino-acid biosynthesis; glycine biosynthesis; glycine from L-serine: step 1/1. Catalyzes the reversible interconversion of serine and glycine with tetrahydrofolate (THF) serving as the one-carbon carrier. This reaction serves as the major source of one-carbon groups required for the biosynthesis of purines, thymidylate, methionine, and other important biomolecules. Also exhibits THF-independent aldolase activity toward beta-hydroxyamino acids, producing glycine and aldehydes, via a retro-aldol mechanism. The polypeptide is Serine hydroxymethyltransferase (Zymomonas mobilis subsp. mobilis (strain ATCC 31821 / ZM4 / CP4)).